Consider the following 389-residue polypeptide: tRNA N(3)-cytidine methyltransferase METTL2 (389 aa).

Residues 1 to 20 are disordered; the sequence is MAASFPEGVPETEDGKRPQF. W78, Y82, G181, D206, D232, L233, and I253 together coordinate S-adenosyl-L-methionine.

This sequence belongs to the methyltransferase superfamily. METL family. Monomer. Interacts with DALRD3.

The protein localises to the cytoplasm. The catalysed reaction is cytidine(32) in tRNA(Thr) + S-adenosyl-L-methionine = N(3)-methylcytidine(32) in tRNA(Thr) + S-adenosyl-L-homocysteine + H(+). It catalyses the reaction cytidine(32) in tRNA(Arg)(CCU) + S-adenosyl-L-methionine = N(3)-methylcytidine(32) in tRNA(Arg)(CCU) + S-adenosyl-L-homocysteine + H(+). In terms of biological role, S-adenosyl-L-methionine-dependent methyltransferase that mediates N(3)-methylcytidine modification of residue 32 of the tRNA anticodon loop of tRNA(Thr)(UGU) and tRNA(Arg)(CCU). N(3)-methylcytidine methylation by METTL2 requires the N6-threonylcarbamoylation of tRNA (t6A37) by the EKC/KEOPS complex as prerequisite. This Mus musculus (Mouse) protein is tRNA N(3)-cytidine methyltransferase METTL2.